Reading from the N-terminus, the 1312-residue chain is Rho GTPase-activating protein gacG (1312 aa).

6 disordered regions span residues 52-74 (VENNNNNNNNNNNSENNKYKRSQ), 111-158 (SNNN…SSSD), 314-519 (ISSS…PRNF), 762-831 (NSIS…SSTG), 1185-1230 (NNNN…SSSV), and 1282-1312 (TGTSETSIHSSNSPISSSISRSPSLTDIVEE). Low complexity-rich tracts occupy residues 53–67 (ENNNNNNNNNNNSEN) and 111–146 (SNNNNSSNSSCNSTPSTSPSSTPRSTNSPRSTYSPR). Residues 147 to 158 (NNNNNFTESSSD) show a composition bias toward polar residues. Low complexity-rich tracts occupy residues 328-355 (TTAAATGSSLSNSNSNSNLQNSQSANNS), 373-397 (HHSSLTHSNSNSNLISTNTSSIGNS), and 414-436 (LNLTENNLNNSSSTSSSPRNNGN). The span at 437–449 (EVIQSSSSTSSPR) shows a compositional bias: polar residues. Residues 479 to 507 (SSTNSLNNSTSSLKSSNNNILQQQQQQQQ) are compositionally biased toward low complexity. 2 stretches are compositionally biased toward polar residues: residues 508–518 (HYDSAPTTPRN) and 763–776 (SISTNPLTNSGNIA). Residues 792–816 (NNNNNNNNNNNNNNNNNNNNNNNNN) are compositionally biased toward low complexity. Positions 1030–1212 (SKIDPITGFN…HHNSHHHRDN (183 aa)) constitute a Rho-GAP domain. Residues 1196–1210 (HHHHHHHHHNSHHHR) are compositionally biased toward basic residues. 2 stretches are compositionally biased toward low complexity: residues 1213–1222 (NNNNSNNNSS) and 1282–1305 (TGTSETSIHSSNSPISSSISRSPS).

Its subcellular location is the cytoplasm. Rho GTPase-activating protein involved in the signal transduction pathway. The polypeptide is Rho GTPase-activating protein gacG (gacG) (Dictyostelium discoideum (Social amoeba)).